Consider the following 181-residue polypeptide: Major urinary protein (181 aa).

Residues 1–19 (MKLLLLLLCLGLTLVCGHA) form the signal peptide. Asn54 is a glycosylation site (N-linked (GlcNAc...) asparagine). Cys83 and Cys176 are disulfide-bonded.

It belongs to the calycin superfamily. Lipocalin family. In terms of tissue distribution, abundant in the urine of adult male rats but absent from that of females.

The protein resides in the cytoplasm. It is found in the cytosol. The protein localises to the secreted. Functionally, major urinary proteins (Mups) bind and release pheromones. They may also protect pheromones from oxidation. In this context, they play a role in the regulation of social behaviors, such as aggression, mating, pup-suckling, territory establishment and dominance. Acts as a kairomone, detected by the prey vomeronasal organ and inducing fear reactions in mice. The chain is Major urinary protein from Rattus norvegicus (Rat).